The sequence spans 662 residues: Polyunsaturated fatty acid (12S)/(13S)-lipoxygenase, epidermal-type (662 aa).

Residues 2 to 114 (GKYKILVVTG…TIYLPEGTAL (113 aa)) enclose the PLAT domain. Positions 114 to 662 (LKVNDDTKNL…PSMVENSVTI (549 aa)) constitute a Lipoxygenase domain. The Fe cation site is built by histidine 360, histidine 365, histidine 540, histidine 544, and isoleucine 662.

It belongs to the lipoxygenase family. Fe cation is required as a cofactor.

Its subcellular location is the cytoplasm. It catalyses the reaction (5Z,8Z,11Z,14Z)-eicosatetraenoate + O2 = (12S)-hydroperoxy-(5Z,8Z,10E,14Z)-eicosatetraenoate. It carries out the reaction 1-O-methyl-(9Z,12Z)-octadecadienoate + O2 = 1-O-methyl-(13S)-hydroperoxy-(9Z,11E)-octadecadienoate. The enzyme catalyses (8Z,11Z,14Z)-eicosatrienoate + O2 = (12S)-hydroperoxy-(8Z,10E,14Z)-eicosatrienoate. The catalysed reaction is (5Z,8Z,11Z)-eicosatrienoate + O2 = (12S)-hydroperoxy-(5Z,8Z,10E)-eicosatrienoate. It catalyses the reaction 1-O-methyl-(5Z,8Z,11Z,14Z)-eicosatetraenoate + O2 = 1-O-methyl-(12S)-hydroperoxy-(5Z,8Z,10E,14Z)-eicosatetraenoate. It carries out the reaction (9Z,12Z)-octadecadienoate + O2 = (13S)-hydroperoxy-(9Z,11E)-octadecadienoate. The enzyme catalyses (4Z,7Z,10Z,13Z,16Z,19Z)-docosahexaenoate + O2 = (14S)-hydroperoxy-(4Z,7Z,10Z,12E,16Z,19Z)-docosahexaenoate. Its pathway is lipid metabolism; hydroperoxy eicosatetraenoic acid biosynthesis. With respect to regulation, arachidonate 12-lipoxygenase activity is decreased when the pH decreases from 7.4 to 6.0. Its function is as follows. Catalyzes the regio and stereo-specific incorporation of a single molecule of dioxygen into free and esterified polyunsaturated fatty acids generating lipid hydroperoxides that can be further reduced to the corresponding hydroxy species. Shows increasing catalytic activity within the series arachidonic acid &lt; 5,8,11-eicosatrienoic acid &lt; linoleic acid &lt; 8,11,14-eicosatrienoic acid. In Rattus norvegicus (Rat), this protein is Polyunsaturated fatty acid (12S)/(13S)-lipoxygenase, epidermal-type.